Consider the following 191-residue polypeptide: Ribonuclease HII (191 aa).

Residues 16–191 (INLIGIDEAG…KLHRKSFKLL (176 aa)) enclose the RNase H type-2 domain. Residues aspartate 22, glutamate 23, and aspartate 110 each contribute to the a divalent metal cation site.

This sequence belongs to the RNase HII family. Requires Mn(2+) as cofactor. Mg(2+) serves as cofactor.

It localises to the cytoplasm. It catalyses the reaction Endonucleolytic cleavage to 5'-phosphomonoester.. Functionally, endonuclease that specifically degrades the RNA of RNA-DNA hybrids. In Campylobacter jejuni subsp. doylei (strain ATCC BAA-1458 / RM4099 / 269.97), this protein is Ribonuclease HII.